Here is a 182-residue protein sequence, read N- to C-terminus: ADP-ribosylation factor 3 (182 aa).

The N-myristoyl glycine moiety is linked to residue Gly2. GTP contacts are provided by residues 24–31 (GLDNAGKT), 67–71 (DLGGQ), and 126–129 (NKQD).

The protein belongs to the small GTPase superfamily. Arf family. As to quaternary structure, interacts with GRIP; but preferentially when bound to GTP.

The protein resides in the golgi apparatus. GTP-binding protein involved in protein trafficking; may modulate vesicle budding and uncoating within the Golgi apparatus. The sequence is that of ADP-ribosylation factor 3 (ARF3) from Arabidopsis thaliana (Mouse-ear cress).